The chain runs to 401 residues: Multidrug resistance protein MdtH (401 aa).

The Cytoplasmic segment spans residues 1-12 (MSRVSQARNLGK). A helical transmembrane segment spans residues 13 to 33 (YFLLIDNMLVVLGFFVVFPLV). The Periplasmic segment spans residues 34 to 98 (SIRFVDQMGW…GFATMGIAHE (65 aa)). A helical membrane pass occupies residues 99–116 (PWLLWFSCLLSGLGGTLF). At 117 to 137 (DPPRSALVVKLMPQQRGRFFS) the chain is on the cytoplasmic side. A helical transmembrane segment spans residues 138–158 (LLMMQDSAGAVIGALLGSWLL). Residues 159–163 (QYDFR) are Periplasmic-facing. A helical membrane pass occupies residues 164-184 (LVCATGAVLFVLCAAFNAWLL). Residues 185-212 (PAWKLSTIRTPVREGMTRVMRDKRFVTY) are Cytoplasmic-facing. The helical transmembrane segment at 213 to 233 (VLTLAGYYMLAVQVMLMLPIM) threads the bilayer. Residues 234 to 242 (VNDVAGAPS) lie on the Periplasmic side of the membrane. The chain crosses the membrane as a helical span at residues 243 to 263 (AVKWMYAIEACLSLTLLYPIA). Topologically, residues 264 to 275 (RWSEKHFRLEHR) are cytoplasmic. A helical transmembrane segment spans residues 276-296 (LMAGLLIMSLSMMPVGMVSGL). The Periplasmic segment spans residues 297-298 (QQ). The helical transmembrane segment at 299 to 319 (LFTLICLFYIGSIIAEPARET) threads the bilayer. Topologically, residues 320–338 (LSASLADARARGSYMGFSR) are cytoplasmic. Residues 339 to 359 (LGLAIGGTIGYIGGGWLFDLG) form a helical membrane-spanning segment. The Periplasmic portion of the chain corresponds to 360–366 (KSAHQPE). Residues 367 to 387 (LPWMMLGIIGIFTFLALGWQF) traverse the membrane as a helical segment. Over 388–401 (SQKRAARRLLERDA) the chain is Cytoplasmic.

It belongs to the major facilitator superfamily. DHA1 family. MdtH (TC 2.A.1.2.21) subfamily.

It localises to the cell inner membrane. This Shigella dysenteriae serotype 1 (strain Sd197) protein is Multidrug resistance protein MdtH.